A 158-amino-acid chain; its full sequence is Small ribosomal subunit protein uS7 (158 aa).

Belongs to the universal ribosomal protein uS7 family. Part of the 30S ribosomal subunit. Contacts proteins S9 and S11.

One of the primary rRNA binding proteins, it binds directly to 16S rRNA where it nucleates assembly of the head domain of the 30S subunit. Is located at the subunit interface close to the decoding center, probably blocks exit of the E-site tRNA. The protein is Small ribosomal subunit protein uS7 of Wolbachia pipientis subsp. Culex pipiens (strain wPip).